The primary structure comprises 485 residues: Probable cytosol aminopeptidase (485 aa).

Lys251 and Asp256 together coordinate Mn(2+). Residue Lys263 is part of the active site. Mn(2+)-binding residues include Asp274, Asp333, and Glu335. Arg337 is a catalytic residue.

It belongs to the peptidase M17 family. It depends on Mn(2+) as a cofactor.

It localises to the cytoplasm. The catalysed reaction is Release of an N-terminal amino acid, Xaa-|-Yaa-, in which Xaa is preferably Leu, but may be other amino acids including Pro although not Arg or Lys, and Yaa may be Pro. Amino acid amides and methyl esters are also readily hydrolyzed, but rates on arylamides are exceedingly low.. It catalyses the reaction Release of an N-terminal amino acid, preferentially leucine, but not glutamic or aspartic acids.. In terms of biological role, presumably involved in the processing and regular turnover of intracellular proteins. Catalyzes the removal of unsubstituted N-terminal amino acids from various peptides. The polypeptide is Probable cytosol aminopeptidase (Brucella melitensis biotype 1 (strain ATCC 23456 / CCUG 17765 / NCTC 10094 / 16M)).